Reading from the N-terminus, the 647-residue chain is tRNA 5-methylaminomethyl-2-thiouridine biosynthesis bifunctional protein MnmC (647 aa).

Residues 1 to 227 (MLTWKNNLTP…KREMLIGSYS (227 aa)) are tRNA (mnm(5)s(2)U34)-methyltransferase. Residues 256–647 (VGAGIAGTTL…ARFLYRKVRK (392 aa)) form an FAD-dependent cmnm(5)s(2)U34 oxidoreductase region.

It in the N-terminal section; belongs to the methyltransferase superfamily. tRNA (mnm(5)s(2)U34)-methyltransferase family. In the C-terminal section; belongs to the DAO family. FAD serves as cofactor.

It localises to the cytoplasm. The catalysed reaction is 5-aminomethyl-2-thiouridine(34) in tRNA + S-adenosyl-L-methionine = 5-methylaminomethyl-2-thiouridine(34) in tRNA + S-adenosyl-L-homocysteine + H(+). Catalyzes the last two steps in the biosynthesis of 5-methylaminomethyl-2-thiouridine (mnm(5)s(2)U) at the wobble position (U34) in tRNA. Catalyzes the FAD-dependent demodification of cmnm(5)s(2)U34 to nm(5)s(2)U34, followed by the transfer of a methyl group from S-adenosyl-L-methionine to nm(5)s(2)U34, to form mnm(5)s(2)U34. The protein is tRNA 5-methylaminomethyl-2-thiouridine biosynthesis bifunctional protein MnmC of Leptospira interrogans serogroup Icterohaemorrhagiae serovar Lai (strain 56601).